Here is an 800-residue protein sequence, read N- to C-terminus: Integrin beta-5 (800 aa).

A signal peptide spans 1 to 24; that stretch reads MPRAPALLFSCLLGLCALVPRLPG. Over 25-722 the chain is Extracellular; it reads LNICTSGSAT…PECGTAPSAM (698 aa). Residues 27–76 enclose the PSI domain; the sequence is ICTSGSATSCEECLLIHPKCAWCFKEDFGSLRSVTSRCDLKANLIRNGCG. Disulfide bonds link Cys28/Cys46, Cys36/Cys463, Cys39/Cys64, Cys49/Cys75, Cys202/Cys211, Cys259/Cys300, Cys401/Cys413, Cys433/Cys461, Cys465/Cys484, Cys476/Cys487, Cys489/Cys498, Cys500/Cys530, Cys513/Cys528, Cys522/Cys533, Cys535/Cys548, Cys550/Cys571, Cys555/Cys569, Cys563/Cys574, and Cys576/Cys585. The region spanning 136–378 is the VWFA domain; it reads YPVDLYYLMD…QLIINAYNSI (243 aa). Mg(2+) contacts are provided by Ser147 and Ser149. Residues Ser149, Asp152, Asp153, and Asp184 each coordinate Ca(2+). Ca(2+) is bound by residues Asn242, Asp244, Pro246, and Glu247. A Mg(2+)-binding site is contributed by Glu247. Asn347 carries N-linked (GlcNAc...) asparagine glycosylation. Position 362 (Gly362) interacts with Ca(2+). 4 I-EGF domains span residues 465–499, 500–549, 550–586, and 587–626; these read CSAG…TRCE, CQEG…SFCE, CDNF…DNCN, and CSTD…ETCE. N-linked (GlcNAc...) asparagine glycosylation occurs at Asn479. N-linked (GlcNAc...) asparagine glycosylation is present at Asn552. Asn586 is a glycosylation site (N-linked (GlcNAc...) asparagine). 9 disulfides stabilise this stretch: Cys587–Cys610, Cys594–Cys608, Cys602–Cys613, Cys615–Cys625, Cys628–Cys631, Cys635–Cys683, Cys641–Cys662, Cys644–Cys658, and Cys691–Cys715. Asn655 and Asn706 each carry an N-linked (GlcNAc...) asparagine glycan. Residues 723–743 traverse the membrane as a helical segment; the sequence is TILLAVVGSILLTGFALLVIW. The Cytoplasmic segment spans residues 744-800; that stretch reads KLLVTIHDRREFAKFQSERSRARYEMASNPLYRKPISTHTVDFTFNKFNKSYNGTVD. Ser771 carries the phosphoserine modification.

It belongs to the integrin beta chain family. In terms of assembly, heterodimer of an alpha and a beta subunit. Beta-5 (ITGB5) associates with alpha-V (ITGAV). Interacts with MYO10. Interacts with DAB2. Integrin ITGAV:ITGB5 interacts with FBLN5 (via N-terminus). ITGAV:ITGB5 interacts with CCN3. Interacts with tensin TNS3; TNS3 also interacts with PEAK1, thus acting as an adapter molecule to bridge the association of PEAK1 with ITGB5.

The protein localises to the cell membrane. Its function is as follows. Integrin alpha-V/beta-5 (ITGAV:ITGB5) is a receptor for fibronectin. It recognizes the sequence R-G-D in its ligand. In Bos taurus (Bovine), this protein is Integrin beta-5 (ITGB5).